A 719-amino-acid chain; its full sequence is Lanosterol synthase (719 aa).

The stretch at 118–160 (RIEVIRYLVNHANPEDGGWGIHIEGKSTVFGTALNYVVLRILG) is one PFTB 1 repeat. Aspartate 451 serves as the catalytic Proton donor. 3 PFTB repeats span residues 478 to 523 (LKDS…MIEH), 555 to 595 (VKNA…SCVK), and 604 to 645 (SRRA…VVQT).

Belongs to the terpene cyclase/mutase family.

The enzyme catalyses (S)-2,3-epoxysqualene = lanosterol. It functions in the pathway terpene metabolism; lanosterol biosynthesis; lanosterol from farnesyl diphosphate: step 3/3. Catalyzes the cyclization of (S)-2,3 oxidosqualene to lanosterol, a reaction that forms the sterol nucleus. The chain is Lanosterol synthase (ERG7) from Pneumocystis carinii.